We begin with the raw amino-acid sequence, 3010 residues long: MSTNPKPQRKTKRNTYRRPQDVKFPGGGQIVGGVYVLPRRGPTLGVRATRKTSERSQPRGRRQPIPKARRPEGRAWAQPGYPWPLYGNEGLGWAGWLLSPRGSRPSWGPTDPRRRSRNLGKVIDTLTCGFADLMGYIPLVGAPLGGAARALAHGVRVLEDGVNYATGNLPGCSFSIFLLALLSCLTIPASAYQVRNASGLYHVTNDCSNSSIVYEAAGMIMHTPGCVPCVRENNASRCWVALTPTLAARNTSIPTTTIRRHVDLLVGAAAFCSAMYVGDLCGSVFLVSQLFTFSPRRYETVQDCNCSIYPGHVSGHRMAWDMMMNWSPTTALVVSQLLRIPQAVVDMVAGAHWGVLAGLAYYSMVGNWAKVLIVMLLFAGVDGVTYTTGGSQARHTQSVTSFFTQGPAQRIQLINTNGSWHINRTALNCNESLNTGFFAALFYAHKFNSSGCPERMASCSSIDKFAQGWGPITYTEPRDLDQRPYCWHYAPRQCGIVPASQVCGPVYCFTPSPVVVGTTDRSGAPTYNWGANETDVLLLNNTRPPQGNWFGCTWMNSTGFTKTCGGPPCNIGGVGNLTLTCPTDCFRKHPEATYTKCGSGPWLTPRCIVDYPYRLWHYPCTVNFTIFKVRMYVGGVEHRLSAACNWTRGERCDLEDRDRSELSPLLLSTTEWQTLPCSFTTLPALSTGLIHLHQNIVDVQYLYGIGSAVVSFVIKWEYIVLLFLLLADARVCACLWMMLLIAQAEAALENLVVLNAASLAGADGILSFLVFFCAAWYIKGRLVPGAAYALYGVWPLLLLLLALPPRAYAMDREMAASCGGVVFVGLILLTLSPHYKVFLARLIWWLQYFITRAEAHLCVWVPPLNVRGGRDAIILLTCAAHPELIFDITKLLLAILGPLMVLQAAITAMPYFVRAQGLIRACMLVRKVAGGHYVQMAFMKLAALTGTYVYDHLTPLQDWAHAGLRDLAVAVEPVVFSDMETKIITWGADTAACGDIILGLPVSARRGREILLGPADSIEGQGWRLLAPITAYAQQTRGLLGCIVTSLTGRDKNQVEGEVQVVSTATQSFLATCVNGVCWTVFHGAGSKTLAGPKGPITQMYTNVDQDLVGWHAPPGARSLTPCTCGSSDLYLVTRHADVIPVRRRGDGRGSLLSPRPVSYLKGSSGGPLLCPSGHAVGIFRAAVCTRGVAKAVDFIPVESMETTMRSPVFTDNSSPPAVPQTFQVAHLHAPTGSGKSTKVPAAYAAQGYKVLVLNPSVAATLGFGAYMSKAHGTDPNIRTGVRTITTGAPITYSTYGKFLADGGCSGGAYDIIICDECHSTDSTTILGIGTVLDQAETAGARLVVLATATPPGSVTVPHPNIEEVALSNTGEIPFYGKAIPLEAIKGGRHLIFCHSKKKCDELAAKLSGLGINAVAYYRGLDVSVIPTSGDVVIVATDALMTGYTGDFDSVIDCNTCVTQTVDFSLDPTFTIETTTVPQDAVSRSQRRGRTGRGRGGIYRFVTPGERPSGMFDSSVLCECYDAGCAWYELTPAETTVRLRAYLNTPGLPVCQDHLEFWESVFTGLTHIDAHFLSQTKQAGDNFPYLVAYQATVCARAQAPPPSWDQMWKCLIRLKPTLHGPTPLLYRLGAVQNEITLTHPITKFIMACMSADLEVVTSTWVLVGGVLAALAAYCLTTGSVVIVGRIILSGRPAVVPDREVLYREFDEMEECASHLPYIEQGMQLAEQFKQKALGLLQTATKQAEAAAPVVESRWRALEAFWAKHMWNFISGIQYLAGLSTLPGNPAIASLMAFTASITSPLTTQNTLLFNILGGWVAAQLAPPSAASAFVGAGIAGAAIGSIGLGKVLVDILAGYGAGVAGALVAFKVMSGEAPSAEDLVNLLPAILSPGALVVGVVCAAILRRHVGPGEGAVQWMNRLIAFASRGNHVSPTHYVPESDAAARVTQILSSLTITQLLKRLHQWINEDCSTPCSGSWLKDVWDWICTVLTDFKTWLQSKLLPKLPGVPFFSCQRGYKGVWRGDGIMQTTCPCGAQITGHVKNGSMRIVGPKTCSNTWHGTFPINAYTTGPCTPSPAPNYSRALWRVAAEEYVEITRVGDFHYVTGMTTDNVKCPCQVPAPEFFTELDGVRLHRYAPACRPLLREDVTFQVGLNQYLVGSQLPCEPEPDVAVLTSMLTDPSHITAETAKRRLARGSPPSLASSSASQLSAPSLKATCTTHHDSPDADLIEANLLWRQEMGGNITRVESENKVVILDSFDPLRAEEDEREVSVAAEILRKSKKFPPALPIWARPDYNPPLLESWKSPDYVPPAVHGCPLPPTTGPPIPPPRKKRTVVLTESTVSSALAELATKTFGSSGSSAVDSGTATAPPDQTSDDGDKESDVESYSSMPPLEGEPGDPDLSDGSWSTVSGEASDDIVCCSMSYTWTGALITPCAAEESKLPINALSNSLLRHHNMVYATTSRSASLRQKKVTFDRLQVLDDHYRDVLKEMKAKASTVKAKLLSVEEACKLTPPHSAKSKFGYGAKDVRNLSSKAINHIRSVWKDLLEDTETPIDTTIMAKSEVFCVQPEKGGRKPARLIVFPDLGVRVCEKMALYDVVSTLPQAVMGSSYGFQYSPGQRVEFLVNAWKSKKSPMGFSYDTRCFDSTVTESDIRVEESIYQCCDLAPEARQAIKSLTERLYIGGPLTNSKGQNCGYRRCRASGVLTTSCGNTLTCYLKATAACRAAKLQDCTMLVNGDDLVVICESAGTQEDAASLRVFTEAMTRYSAPPGDPPQPEYDLELITSCSSNVSVAHDASGKRVYYLTRDPTTPLARAAWETARHTPVNSWLGNIIMYAPTLWARMILMTHFFSILLAQEQLEKALDCQIYGACYSIEPLDLPQIIQRLHGLSAFSLHSYSPGEINRVASCLRKLGVPPLRVWRHRARSVRARLLSQGGRAATCGKYLFNWAVRTKLKLTPIPAASQLDLSSWFVAGYSGGDIYHSLSRARPRWFMWCLLLLSVGVGIYLLPNR.

Serine 2 bears the N-acetylserine; by host mark. The tract at residues 2–23 (STNPKPQRKTKRNTYRRPQDVK) is interaction with STAT1. The interval 2 to 58 (STNPKPQRKTKRNTYRRPQDVKFPGGGQIVGGVYVLPRRGPTLGVRATRKTSERSQP) is interaction with EIF2AK2/PKR. Residues 2 to 59 (STNPKPQRKTKRNTYRRPQDVKFPGGGQIVGGVYVLPRRGPTLGVRATRKTSERSQPR) are interaction with DDX3X. Residues 2–75 (STNPKPQRKT…PKARRPEGRA (74 aa)) are disordered. Topologically, residues 2-168 (STNPKPQRKT…EDGVNYATGN (167 aa)) are cytoplasmic. 2 short sequence motifs (nuclear localization signal) span residues 5–13 (PKPQRKTKR) and 38–43 (PRRGPT). Positions 7–16 (PQRKTKRNTY) are enriched in basic residues. Serine 53 carries the phosphoserine; by host modification. 2 short sequence motifs (nuclear localization signal) span residues 58–64 (PRGRRQP) and 66–71 (PKARRP). The span at 58 to 68 (PRGRRQPIPKA) shows a compositional bias: basic residues. Position 99 is a phosphoserine; by host (serine 99). An important for endoplasmic reticulum and mitochondrial localization region spans residues 112–152 (PRRRSRNLGKVIDTLTCGFADLMGYIPLVGAPLGGAARALA). Phosphoserine; by host PKA is present on serine 116. Positions 122–173 (VIDTLTCGFADLMGYIPLVGAPLGGAARALAHGVRVLEDGVNYATGNLPGCS) are interaction with APOA2. The important for lipid droplets localization stretch occupies residues 164–167 (YATG). Residues 169–189 (LPGCSFSIFLLALLSCLTIPA) traverse the membrane as a helical segment. A propeptide spans 178 to 191 (LLALLSCLTIPASA) (ER anchor for the core protein, removed in mature form by host signal peptidase). The Lumenal segment spans residues 190–358 (SAYQVRNASG…AGAHWGVLAG (169 aa)). 4 N-linked (GlcNAc...) asparagine; by host glycosylation sites follow: asparagine 196, asparagine 209, asparagine 234, and asparagine 250. Positions 265 to 296 (LVGAAAFCSAMYVGDLCGSVFLVSQLFTFSPR) are important for fusion. An N-linked (GlcNAc...) asparagine; by host glycan is attached at asparagine 305. The helical transmembrane segment at 359–379 (LAYYSMVGNWAKVLIVMLLFA) threads the bilayer. Over 380-725 (GVDGVTYTTG…WEYIVLLFLL (346 aa)) the chain is Lumenal. Residues 385–411 (TYTTGGSQARHTQSVTSFFTQGPAQRI) are HVR1. Residues asparagine 417, asparagine 423, asparagine 430, and asparagine 448 are each glycosylated (N-linked (GlcNAc...) (high mannose) asparagine; by host). 4 disulfides stabilise this stretch: cysteine 429–cysteine 552, cysteine 452–cysteine 459, cysteine 486–cysteine 494, and cysteine 503–cysteine 508. Residues 474–479 (YTEPRD) form an HVR2 region. The interval 480 to 493 (LDQRPYCWHYAPRQ) is CD81-binding 1. N-linked (GlcNAc...) (high mannose) asparagine; by host glycosylation is present at asparagine 532. Asparagine 540 carries an N-linked (GlcNAc...) asparagine; by host glycan. Residues 544–551 (PPQGNWFG) form a CD81-binding 2 region. An N-linked (GlcNAc...) (high mannose) asparagine; by host glycan is attached at asparagine 556. A disulfide bridge links cysteine 564 with cysteine 569. N-linked (GlcNAc...) (high mannose) asparagine; by host glycosylation occurs at asparagine 576. Disulfide bonds link cysteine 581–cysteine 585, cysteine 597–cysteine 620, and cysteine 607–cysteine 644. N-linked (GlcNAc...) (high mannose) asparagine; by host glycans are attached at residues asparagine 623 and asparagine 645. Cysteines 652 and 677 form a disulfide. The tract at residues 660 to 671 (SELSPLLLSTTE) is PKR/eIF2-alpha phosphorylation homology domain (PePHD). A helical membrane pass occupies residues 726–746 (LADARVCACLWMMLLIAQAEA). The Lumenal portion of the chain corresponds to 747–757 (ALENLVVLNAA). The chain crosses the membrane as a helical span at residues 758-778 (SLAGADGILSFLVFFCAAWYI). Topologically, residues 779–781 (KGR) are cytoplasmic. The chain crosses the membrane as a helical span at residues 782–803 (LVPGAAYALYGVWPLLLLLLAL). Residues 804–813 (PPRAYAMDRE) lie on the Lumenal side of the membrane. Residues 814–834 (MAASCGGVVFVGLILLTLSPH) traverse the membrane as a helical segment. Residues 835 to 838 (YKVF) are Cytoplasmic-facing. The helical transmembrane segment at 839 to 859 (LARLIWWLQYFITRAEAHLCV) threads the bilayer. At 860 to 881 (WVPPLNVRGGRDAIILLTCAAH) the chain is on the lumenal side. A helical transmembrane segment spans residues 882–902 (PELIFDITKLLLAILGPLMVL). The 124-residue stretch at 903 to 1026 (QAAITAMPYF…SIEGQGWRLL (124 aa)) folds into the Peptidase C18 domain. Residues 903-1657 (QAAITAMPYF…CMSADLEVVT (755 aa)) are Cytoplasmic-facing. Residues 904–1206 (AAITAMPYFV…PVESMETTMR (303 aa)) are protease NS2-3. The S-palmitoyl cysteine; by host moiety is linked to residue cysteine 922. Residues 929–949 (AGGHYVQMAFMKLAALTGTYV) form an interaction with host SCPS1 region. Catalysis depends on for protease NS2 activity; shared with dimeric partner residues histidine 952, glutamate 972, and cysteine 993. Positions 1027-1208 (APITAYAQQT…ESMETTMRSP (182 aa)) constitute a Peptidase S29 domain. Active-site charge relay system; for serine protease NS3 activity residues include histidine 1083 and aspartate 1107. Zn(2+)-binding residues include cysteine 1123 and cysteine 1125. The Charge relay system; for serine protease NS3 activity role is filled by serine 1165. Zn(2+) is bound by residues cysteine 1171 and histidine 1175. One can recognise a Helicase ATP-binding domain in the interval 1217-1369 (PAVPQTFQVA…PNIEEVALSN (153 aa)). 1230-1237 (APTGSGKS) contributes to the ATP binding site. Positions 1237 and 1317 each coordinate Mg(2+). Residues 1316 to 1319 (DECH) carry the DECH box motif. Residues 1486–1497 (QRRGRTGRGRGG) form an RNA-binding region. The chain crosses the membrane as a helical span at residues 1658 to 1678 (STWVLVGGVLAALAAYCLTTG). An NS3-binding region spans residues 1679–1690 (SVVIVGRIILSG). Residues 1679–1805 (SVVIVGRIIL…SITSPLTTQN (127 aa)) lie on the Cytoplasmic side of the membrane. The chain crosses the membrane as a helical span at residues 1806–1824 (TLLFNILGGWVAAQLAPPS). The Lumenal portion of the chain corresponds to 1825–1828 (AASA). A helical membrane pass occupies residues 1829 to 1849 (FVGAGIAGAAIGSIGLGKVLV). Aspartate 1850 is a topological domain (cytoplasmic). Residues 1851-1871 (ILAGYGAGVAGALVAFKVMSG) form a helical membrane-spanning segment. Topologically, residues 1872–1881 (EAPSAEDLVN) are lumenal. Residues 1882–1902 (LLPAILSPGALVVGVVCAAIL) form a helical membrane-spanning segment. The Cytoplasmic segment spans residues 1903–1972 (RRHVGPGEGA…WINEDCSTPC (70 aa)). S-palmitoyl cysteine; by host attachment occurs at residues cysteine 1968 and cysteine 1972. Residues 1973–2002 (SGSWLKDVWDWICTVLTDFKTWLQSKLLPK) lie within the membrane without spanning it. The Cytoplasmic portion of the chain corresponds to 2003-2989 (LPGVPFFSCQ…YHSLSRARPR (987 aa)). Residues cysteine 2011, cysteine 2029, cysteine 2031, and cysteine 2052 each coordinate Zn(2+). Positions 2120-2208 (EFFTELDGVR…ASSSASQLSA (89 aa)) are FKBP8-binding. The tract at residues 2120-2332 (EFFTELDGVR…PIPPPRKKRT (213 aa)) is transcriptional activation. The tract at residues 2135–2139 (PACRP) is interaction with non-structural protein 4A. Residues 2187–2220 (KRRLARGSPPSLASSSASQLSAPSLKATCTTHHD) form a disordered region. The segment at 2189-2441 (RLARGSPPSL…PCAAEESKLP (253 aa)) is interaction with host SKP2. Serine 2194 is subject to Phosphoserine; by host; in p56. The segment covering 2194 to 2211 (SPPSLASSSASQLSAPSL) has biased composition (low complexity). Serine 2197, serine 2201, serine 2204, serine 2207, and serine 2210 each carry phosphoserine; by host; in p58. Residues 2210–2249 (SLKATCTTHHDSPDADLIEANLLWRQEMGGNITRVESENK) form an ISDR region. An interaction with EIF2AK2/PKR region spans residues 2210–2275 (SLKATCTTHH…REVSVAAEIL (66 aa)). The NS4B-binding stretch occupies residues 2249 to 2306 (KVVILDSFDPLRAEEDEREVSVAAEILRKSKKFPPALPIWARPDYNPPLLESWKSPDY). Residues 2322–2325 (PPIP) carry the SH3-binding motif. The Nuclear localization signal motif lies at 2326-2334 (PPRKKRTVV). Lysine 2350 participates in a covalent cross-link: Glycyl lysine isopeptide (Lys-Gly) (interchain with G-Cter in ubiquitin). The span at 2351–2371 (TFGSSGSSAVDSGTATAPPDQ) shows a compositional bias: polar residues. The interval 2351-2408 (TFGSSGSSAVDSGTATAPPDQTSDDGDKESDVESYSSMPPLEGEPGDPDLSDGSWSTV) is disordered. The interval 2354–2377 (SSGSSAVDSGTATAPPDQTSDDGD) is V3. The segment covering 2372–2382 (TSDDGDKESDV) has biased composition (acidic residues). Phosphoserine; by host occurs at positions 2448 and 2461. The region spanning 2633–2751 (PMGFSYDTRC…ICESAGTQED (119 aa)) is the RdRp catalytic domain. Aspartate 2639, aspartate 2737, and aspartate 2738 together coordinate Mg(2+). A helical transmembrane segment spans residues 2990-3010 (WFMWCLLLLSVGVGIYLLPNR).

This sequence belongs to the hepacivirus polyprotein family. In terms of assembly, homooligomer. Interacts with E1 (via C-terminus). Interacts with the non-structural protein 5A. Interacts (via N-terminus) with host STAT1 (via SH2 domain); this interaction results in decreased STAT1 phosphorylation and ubiquitin-mediated proteasome-dependent STAT1 degradation, leading to decreased IFN-stimulated gene transcription. Interacts with host STAT3; this interaction constitutively activates STAT3. Interacts with host LTBR receptor. Interacts with host TNFRSF1A receptor and possibly induces apoptosis. Interacts with host HNRPK. Interacts with host YWHAE. Interacts with host UBE3A/E6AP. Interacts with host DDX3X. Interacts with host APOA2. Interacts with host RXRA protein. Interacts with host SP110 isoform 3/Sp110b; this interaction sequesters the transcriptional corepressor SP110 away from the nucleus. Interacts with host CREB3 nuclear transcription protein; this interaction triggers cell transformation. Interacts with host ACY3. Interacts with host C1QR1. Interacts with host RBM24; this interaction, which enhances the interaction of the mature core protein with 5'-UTR, may inhibit viral translation and favor replication. Interacts with host EIF2AK2/PKR; this interaction induces the autophosphorylation of EIF2AK2. Part of the viral assembly initiation complex composed of NS2, E1, E2, NS3, NS4A, NS5A and the mature core protein. Forms a heterodimer with envelope glycoprotein E2. Interacts with mature core protein. Interacts with protease NS2. The heterodimer E1/E2 interacts with host CLDN1; this interaction plays a role in viral entry into host cell. Interacts with host SPSB2 (via C-terminus). Part of the viral assembly initiation complex composed of NS2, E1, E2, NS3, NS4A, NS5A and the mature core protein. Interacts with host NEURL3; this interaction prevents E1 binding to glycoprotein E2. As to quaternary structure, forms a heterodimer with envelope glycoprotein E1. Interacts with host CD81 and SCARB1 receptors; these interactions play a role in viral entry into host cell. Interacts with host EIF2AK2/PKR; this interaction inhibits EIF2AK2 and probably allows the virus to evade the innate immune response. Interacts with host CD209/DC-SIGN and CLEC4M/DC-SIGNR. Interact with host SPCS1; this interaction is essential for viral particle assembly. Interacts with protease NS2. The heterodimer E1/E2 interacts with host CLDN1; this interaction plays a role in viral entry into host cell. Part of the viral assembly initiation complex composed of NS2, E1, E2, NS3, NS4A, NS5A and the mature core protein. Interacts with host SLC3A2/4F2hc; the interaction may facilitate viral entry into host cell. Interacts with human PLSCR1. In terms of assembly, homohexamer. Homoheptamer. Interacts with protease NS2. Homodimer. Interacts with host SPCS1; this interaction is essential for viral particle assembly. Interacts with envelope glycoprotein E1. Interacts with envelope glycoprotein E2. Interacts with viroporin p7. Interacts with serine protease/helicase NS3. Part of the replication complex composed of NS2, NS3, NS4A, NS4B, NS5A and the RNA-directed RNA polymerase embedded in an ER-derived membranous web. Part of the viral assembly initiation complex composed of NS2, E1, E2, NS3, NS4A, NS5A and the mature core protein. As to quaternary structure, interacts with protease NS2. Interacts with non-structural protein 4A; this interaction stabilizes the folding of NS3 serine protease. NS3-NS4A interaction is essential for NS3 activation and allows membrane anchorage of the latter. NS3/NS4A complex also prevents phosphorylation of host IRF3, thus preventing the establishment of dsRNA induced antiviral state. Interacts with host MAVS; this interaction leads to the cleavage and inhibition of host MAVS. Interacts with host TICAM1; this interaction leads to the cleavage and inhibition of host TICAM1. Interacts with host TANK-binding kinase/TBK1; this interaction results in the inhibition of the association between TBK1 and IRF3, which leads to the inhibition of IRF3 activation. Interacts with host RBM24. Part of the replication complex composed of NS2, NS3, NS4A, NS4B, NS5A and the RNA-directed RNA polymerase embedded in an ER-derived membranous web. Part of the viral assembly initiation complex composed of NS2, E1, E2, NS3, NS4A, NS5A and the mature core protein. In terms of assembly, interacts with NS3 serine protease; this interaction stabilizes the folding of NS3 serine protease. NS3-NS4A interaction is essential for NS3 activation and allows membrane anchorage of the latter. Interacts with non-structural protein 5A (via N-terminus). Part of the replication complex composed of NS2, NS3, NS4A, NS4B, NS5A and the RNA-directed RNA polymerase embedded in an ER-derived membranous web. Part of the viral assembly initiation complex composed of NS2, E1, E2, NS3, NS4A, NS5A and the mature core protein. Homomultimer. Interacts with non-structural protein NS5A. Interacts with host PLA2G4C; this interaction likely initiates the recruitment of replication complexes to lipid droplets. Interacts with host STING; this interaction disrupts the interaction between STING and TBK1 thereby suppressing the interferon signaling. Part of the replication complex composed of NS2, NS3, NS4A, NS4B, NS5A and the RNA-directed RNA polymerase embedded in an ER-derived membranous web. As to quaternary structure, monomer. Homodimer; dimerization is required for RNA-binding. Interacts with the mature core protein. Interacts (via N-terminus) with non-structural protein 4A. Interacts with non-structural protein 4B. Interacts (via region D2) with RNA-directed RNA polymerase. Part of the viral assembly initiation complex composed of NS2, E1, E2, NS3, NS4A, NS5A and the mature core protein. Part of the replication complex composed of NS2, NS3, NS4A, NS4B, NS5A and the RNA-directed RNA polymerase embedded in an ER-derived membranous web. Interacts with host GRB2. Interacts with host BIN1. Interacts with host PIK3R1. Interacts with host SRCAP. Interacts with host FKBP8. Interacts (via C-terminus) with host VAPB (via MSP domain). Interacts with host EIF2AK2/PKR; this interaction leads to disruption of EIF2AK2 dimerization by NS5A and probably allows the virus to evade the innate immune response. Interacts (via N-terminus) with host PACSIN2 (via N-terminus); this interaction attenuates protein kinase C alpha-mediated phosphorylation of PACSIN2 by disrupting the interaction between PACSIN2 and PRKCA. Interacts (via N-terminus) with host SRC kinase (via SH2 domain). Interacts with most Src-family kinases. Interacts with host IFI27 and SKP2; promotes the ubiquitin-mediated proteasomal degradation of NS5A. Interacts with host GPS2. Interacts with host TNFRSF21; this interaction allows the modulation by the virus of JNK, p38 MAPK, STAT3, and Akt signaling pathways in a DR6-dependent manner. Interacts (via N-terminus) with host CIDEB (via N-terminus); this interaction seems to regulate the association of HCV particles with APOE. Interacts with host CHKA/Choline Kinase-alpha; CHKA bridges host PI4KA and NS5A and potentiates NS5A-stimulated PI4KA activity, which then facilitates the targeting of the ternary complex to the ER for viral replication. Interacts with host SPSB2 (via C-terminus); this interaction targets NS5A for ubiquitination and degradation. Interacts with host RAB18; this interaction may promote the association of NS5A and other replicase components with lipid droplets. Interacts (via region D2) with host PPIA/CYPA; the interaction stimulates RNA-binding ability of NS5A and is dependent on the peptidyl-prolyl cis-trans isomerase activity of PPIA/CYPA. Interacts with host TRIM14; this interaction induces the degradation of NS5A. In terms of assembly, homooligomer. Interacts with non-structural protein 5A. Interacts with host VAPB. Interacts with host PRK2/PKN2. Interacts with host HNRNPA1 and SEPT6; these interactions facilitate viral replication. Part of the replication complex composed of NS2, NS3, NS4A, NS4B, NS5A and the RNA-directed RNA polymerase. Zn(2+) serves as cofactor. The cofactor is Mg(2+). Post-translationally, specific enzymatic cleavages in vivo yield mature proteins. The structural proteins, core, E1, E2 and p7 are produced by proteolytic processing by host signal peptidases. The core protein precursor is synthesized as a 23 kDa, which is retained in the ER membrane through the hydrophobic signal peptide. Cleavage by the signal peptidase releases the 21 kDa mature core protein. The cleavage of the core protein precursor occurs between aminoacids 176 and 188 but the exact cleavage site is not known. Some degraded forms of the core protein appear as well during the course of infection. The other proteins (p7, NS2, NS3, NS4A, NS4B, NS5A and NS5B) are cleaved by the viral proteases. Autoprocessing between NS2 and NS3 is mediated by the NS2 cysteine protease catalytic domain and regulated by the NS3 N-terminal domain. Phosphorylated by host PKC and PKA. In terms of processing, ubiquitinated; mediated by UBE3A and leading to core protein subsequent proteasomal degradation. Post-translationally, highly N-glycosylated. Palmitoylation is required for NS2/3 autoprocessing and E2 recruitment to membranes. In terms of processing, palmitoylated. This modification may play a role in its polymerization or in protein-protein interactions. Post-translationally, phosphorylated on serines in a basal form termed p56. p58 is a hyperphosphorylated form of p56. p56 and p58 coexist in the cell in roughly equivalent amounts. Hyperphosphorylation is dependent on the presence of NS4A. Host CSNK1A1/CKI-alpha or RPS6KB1 kinases may be responsible for NS5A phosphorylation. Tyrosine phosphorylation is essential for the interaction with host SRC. In terms of processing, ubiquitinated. Ubiquitination, most probably at Lys-2350, mediated by host IFI27 and SKP2 leads to proteasomal degradation, restricting viral infection. Ubiquitination by host TRIM22 leads to interruption of viral replication. Post-translationally, the N-terminus is phosphorylated by host PRK2/PKN2.

It localises to the host endoplasmic reticulum membrane. The protein resides in the host mitochondrion membrane. Its subcellular location is the virion. It is found in the host cytoplasm. The protein localises to the host nucleus. It localises to the host lipid droplet. The protein resides in the virion membrane. Its subcellular location is the host mitochondrion. It is found in the host cell membrane. The protein localises to the host perinuclear region. The enzyme catalyses Hydrolysis of four peptide bonds in the viral precursor polyprotein, commonly with Asp or Glu in the P6 position, Cys or Thr in P1 and Ser or Ala in P1'.. The catalysed reaction is a ribonucleoside 5'-triphosphate + H2O = a ribonucleoside 5'-diphosphate + phosphate + H(+). It carries out the reaction ATP + H2O = ADP + phosphate + H(+). It catalyses the reaction RNA(n) + a ribonucleoside 5'-triphosphate = RNA(n+1) + diphosphate. With respect to regulation, inhibited by the antiviral drug hexamethylene amiloride. Inhibition by amantadine appears to be genotype-dependent. Also inhibited by long-alkyl-chain iminosugar derivatives. Its activity is regulated as follows. Activity is up-regulated by PRK2/PKN2-mediated phosphorylation. Packages viral RNA to form a viral nucleocapsid, and promotes virion budding. Participates in the viral particle production as a result of its interaction with the non-structural protein 5A. Binds RNA and may function as a RNA chaperone to induce the RNA structural rearrangements taking place during virus replication. Modulates viral translation initiation by interacting with viral IRES and 40S ribosomal subunit. Affects various cell signaling pathways, host immunity and lipid metabolism. Prevents the establishment of cellular antiviral state by blocking the interferon-alpha/beta (IFN-alpha/beta) and IFN-gamma signaling pathways and by blocking the formation of phosphorylated STAT1 and promoting ubiquitin-mediated proteasome-dependent degradation of STAT1. Activates STAT3 leading to cellular transformation. Regulates the activity of cellular genes, including c-myc and c-fos. May repress the promoter of p53, and sequester CREB3 and SP110 isoform 3/Sp110b in the cytoplasm. Represses cell cycle negative regulating factor CDKN1A, thereby interrupting an important check point of normal cell cycle regulation. Targets transcription factors involved in the regulation of inflammatory responses and in the immune response: suppresses TNF-induced NF-kappa-B activation, and activates AP-1. Binds to dendritic cells (DCs) via C1QR1, resulting in down-regulation of T-lymphocytes proliferation. Alters lipid metabolism by interacting with hepatocellular proteins involved in lipid accumulation and storage. Induces up-regulation of FAS promoter activity, and thereby contributes to the increased triglyceride accumulation in hepatocytes (steatosis). In terms of biological role, forms a heterodimer with envelope glycoprotein E2, which mediates virus attachment to the host cell, virion internalization through clathrin-dependent endocytosis and fusion with host membrane. Fusion with the host cell is most likely mediated by both E1 and E2, through conformational rearrangements of the heterodimer required for fusion rather than a classical class II fusion mechanism. E1/E2 heterodimer binds host apolipoproteins such as APOB and ApoE thereby forming a lipo-viro-particle (LVP). APOE associated to the LVP allows the initial virus attachment to cell surface receptors such as the heparan sulfate proteoglycans (HSPGs), syndecan-1 (SDC1), syndecan-1 (SDC2), the low-density lipoprotein receptor (LDLR) and scavenger receptor class B type I (SCARB1). The cholesterol transfer activity of SCARB1 allows E2 exposure and binding of E2 to SCARB1 and the tetraspanin CD81. E1/E2 heterodimer binding on CD81 activates the epithelial growth factor receptor (EGFR) signaling pathway. Diffusion of the complex E1-E2-EGFR-SCARB1-CD81 to the cell lateral membrane allows further interaction with Claudin 1 (CLDN1) and occludin (OCLN) to finally trigger HCV entry. Its function is as follows. Forms a heterodimer with envelope glycoprotein E1, which mediates virus attachment to the host cell, virion internalization through clathrin-dependent endocytosis and fusion with host membrane. Fusion with the host cell is most likely mediated by both E1 and E2, through conformational rearrangements of the heterodimer required for fusion rather than a classical class II fusion mechanism. The interaction between envelope glycoprotein E2 and host apolipoprotein E/APOE allows the proper assembly, maturation and infectivity of the viral particles. This interaction is probably promoted via the up-regulation of cellular autophagy by the virus. E1/E2 heterodimer binds host apolipoproteins such as APOB and APOE thereby forming a lipo-viro-particle (LVP). APOE associated to the LVP allows the initial virus attachment to cell surface receptors such as the heparan sulfate proteoglycans (HSPGs), syndecan-1 (SDC1), syndecan-1 (SDC2), the low-density lipoprotein receptor (LDLR) and scavenger receptor class B type I (SCARB1). The cholesterol transfer activity of SCARB1 allows E2 exposure and binding of E2 to SCARB1 and the tetraspanin CD81. E1/E2 heterodimer binding on CD81 activates the epithelial growth factor receptor (EGFR) signaling pathway. Diffusion of the complex E1-E2-EGFR-SCARB1-CD81 to the cell lateral membrane allows further interaction with Claudin 1 (CLDN1) and occludin (OCLN) to finally trigger HCV entry. Inhibits host EIF2AK2/PKR activation, preventing the establishment of an antiviral state. Viral ligand for CD209/DC-SIGN and CLEC4M/DC-SIGNR, which are respectively found on dendritic cells (DCs), and on liver sinusoidal endothelial cells and macrophage-like cells of lymph node sinuses. These interactions allow the capture of circulating HCV particles by these cells and subsequent facilitated transmission to permissive cells such as hepatocytes and lymphocyte subpopulations. The interaction between E2 and host amino acid transporter complex formed by SLC3A2 and SLC7A5/LAT1 may facilitate viral entry into host cell. Functionally, ion channel protein that acts as a viroporin and plays an essential role in the assembly, envelopment and secretion of viral particles. Regulates the host cell secretory pathway, which induces the intracellular retention of viral glycoproteins and favors assembly of viral particles. Creates a pore in acidic organelles and releases Ca(2+) and H(+) in the cytoplasm of infected cells, leading to a productive viral infection. High levels of cytoplasmic Ca(2+) may trigger membrane trafficking and transport of viral ER-associated proteins to viroplasms, sites of viral genome replication. This ionic imbalance induces the assembly of the inflammasome complex, which triggers the maturation of pro-IL-1beta into IL-1beta through the action of caspase-1. Targets also host mitochondria and induces mitochondrial depolarization. In addition of its role as a viroporin, acts as a lipid raft adhesion factor. Cysteine protease required for the proteolytic auto-cleavage between the non-structural proteins NS2 and NS3. The N-terminus of NS3 is required for the function of NS2 protease (active region NS2-3). Promotes the initiation of viral particle assembly by mediating the interaction between structural and non-structural proteins. In terms of biological role, displays three enzymatic activities: serine protease with a chymotrypsin-like fold, NTPase and RNA helicase. NS3 serine protease, in association with NS4A, is responsible for the cleavages of NS3-NS4A, NS4A-NS4B, NS4B-NS5A and NS5A-NS5B. The NS3/NS4A complex prevents phosphorylation of host IRF3, thus preventing the establishment of dsRNA induced antiviral state. The NS3/NS4A complex induces host amino acid transporter component SLC3A2, thus contributing to HCV propagation. NS3 RNA helicase binds to RNA and unwinds both dsDNA and dsRNA in the 3' to 5' direction, and likely resolves RNA complicated stable secondary structures in the template strand. Binds a single ATP and catalyzes the unzipping of a single base pair of dsRNA. Inhibits host antiviral proteins TBK1 and IRF3 thereby preventing the establishment of an antiviral state. Cleaves host MAVS/CARDIF thereby preventing the establishment of an antiviral state. Cleaves host TICAM1/TRIF, thereby disrupting TLR3 signaling and preventing the establishment of an antiviral state. Its function is as follows. Induces a specific membrane alteration that serves as a scaffold for the virus replication complex. This membrane alteration gives rise to the so-called ER-derived membranous web that contains the replication complex. NS4B self-interaction contributes to its function in membranous web formation. Promotes host TRIF protein degradation in a CASP8-dependent manner thereby inhibiting host TLR3-mediated interferon signaling. Disrupts the interaction between STING and TBK1 contributing to the inhibition of interferon signaling. Functionally, phosphorylated protein that is indispensable for viral replication and assembly. Both hypo- and hyperphosphorylated states are required for the viral life cycle. The hyperphosphorylated form of NS5A is an inhibitor of viral replication. Involved in RNA-binding and especially in binding to the viral genome. Zinc is essential for RNA-binding. Participates in the viral particle production as a result of its interaction with the mature viral core protein. Its interaction with host VAPB may target the viral replication complex to vesicles. Down-regulates viral IRES translation initiation. Mediates interferon resistance, presumably by interacting with and inhibiting host EIF2AK2/PKR. Prevents BIN1-induced apoptosis. Acts as a transcriptional activator of some host genes important for viral replication when localized in the nucleus. Via the interaction with host PACSIN2, modulates lipid droplet formation in order to promote virion assembly. Modulates TNFRSF21/DR6 signaling pathway for viral propagation. RNA-dependent RNA polymerase that performs primer-template recognition and RNA synthesis during viral replication. Initiates RNA transcription/replication at a flavin adenine dinucleotide (FAD), resulting in a 5'- FAD cap on viral RNAs. In this way, recognition of viral 5' RNA by host pattern recognition receptors can be bypassed, thereby evading activation of antiviral pathways. In terms of biological role, peptide cofactor which forms a non-covalent complex with the N-terminal of NS3 serine protease. The NS3/NS4A complex prevents phosphorylation of host IRF3, thus preventing the establishment of dsRNA induced antiviral state. The NS3/NS4A complex induces host amino acid transporter component SLC3A2, thus contributing to HCV propagation. In Homo sapiens (Human), this protein is Genome polyprotein.